Reading from the N-terminus, the 698-residue chain is Quillaic acid 3-O-glycosyltransferase CSL1 (698 aa).

Residues 14–34 (ALLSRLHILFHSALVASVFYY) form a helical membrane-spanning segment. Asn-38 is a glycosylation site (N-linked (GlcNAc...) asparagine). Residues 42 to 62 (GPAWALMTFAELTLAFIWALT) form a helical membrane-spanning segment. Residues Lys-99 and Glu-100 each coordinate UDP-alpha-D-glucose. Asp-129 is an active-site residue. Asn-317 carries N-linked (GlcNAc...) asparagine glycosylation. The active site involves Ser-436. 6 consecutive transmembrane segments (helical) span residues 478–498 (WTSGLIGVGISKFSPFTYAMS), 508–528 (YAYFAFSGLFAVFFLIYGVVL), 546–566 (WLLAFAGVFISSLLQHLYEVL), 581–601 (IWIIKSITACLFGLLDAMLNK), 636–656 (MFMVPLMILVVFNLVSFFGGL), and 669–689 (FAQLFLSLFILALSYPIMEEI).

It belongs to the glycosyltransferase 2 family. Plant cellulose synthase-like G subfamily. Mainly expressed in flowers and flower buds and, to a lesser extent, in leaves, stems and roots.

The protein localises to the golgi apparatus membrane. Its pathway is secondary metabolite biosynthesis; terpenoid biosynthesis. In terms of biological role, component of the oleanane-type triterpene saponins (e.g. saponarioside A and saponarioside B) biosynthetic pathway, leading to the production of natural products with detergent properties used as traditional sources of soap. Glycosyltransferase that mediates the conversion of quillaic acid (QA) to QA-mono via the initiation of the C-3 sugar chain. The polypeptide is Quillaic acid 3-O-glycosyltransferase CSL1 (Saponaria officinalis (Common soapwort)).